The chain runs to 465 residues: MLPLVALVGRPNVGKSTIFNALTRTRDALVHDQPGVTRDRNYGVCRLDEDNHFLVVDTGGIAGEDEGLAGATTRQARAAAAEADLILFVVDAREGTSALDDEILAWLRKLSRPTLLLINKIDGTDEDSVRSEFARYGFGEMLTVSAAHRQGLDDLLDEVIQRLPEEGSGEELDNDPNRIRIAFVGRPNVGKSTLVNRILGEERMIASDVPGTTRDSIAVDLERDGREYRLIDTAGLRRRSRVDEVVEKFSVVKTMQSIEQCQVAVLMLDATEGVTDQDATVLGAVLDAGRALVIAINKWDGLTEYQREQAETMLSLKLGFVPWAESVRISAKHGSGLRELFRAVHRAHESANKTFTTSEVNKALEVAYETNPPPTIRGHVSKLRYVHPAGANPPTFIVHGTRLKELQESYKRYLENFFRKRFKLIGTPVSFIFREGTNPYEGKKNVLTERQVKAKRRLMKHVKGK.

EngA-type G domains follow at residues 3–167 (PLVA…PEEG) and 179–352 (IRIA…ESAN). GTP contacts are provided by residues 9-16 (GRPNVGKS), 57-61 (DTGGI), 119-122 (NKID), 185-192 (GRPNVGKS), 232-236 (DTAGL), and 297-300 (NKWD). A KH-like domain is found at 353–437 (KTFTTSEVNK…PVSFIFREGT (85 aa)).

The protein belongs to the TRAFAC class TrmE-Era-EngA-EngB-Septin-like GTPase superfamily. EngA (Der) GTPase family. In terms of assembly, associates with the 50S ribosomal subunit.

Its function is as follows. GTPase that plays an essential role in the late steps of ribosome biogenesis. The polypeptide is GTPase Der (Stenotrophomonas maltophilia (strain K279a)).